The sequence spans 407 residues: Imidazolonepropionase (407 aa).

Positions 68 and 70 each coordinate Fe(3+). Residues His-68 and His-70 each coordinate Zn(2+). 4-imidazolone-5-propanoate contacts are provided by Arg-77, Tyr-140, and His-173. Position 140 (Tyr-140) interacts with N-formimidoyl-L-glutamate. His-238 is a binding site for Fe(3+). Residue His-238 coordinates Zn(2+). Gln-241 contacts 4-imidazolone-5-propanoate. Asp-313 is a binding site for Fe(3+). Asp-313 serves as a coordination point for Zn(2+). N-formimidoyl-L-glutamate contacts are provided by Asn-315 and Gly-317. Thr-318 is a binding site for 4-imidazolone-5-propanoate.

This sequence belongs to the metallo-dependent hydrolases superfamily. HutI family. Requires Zn(2+) as cofactor. The cofactor is Fe(3+).

The protein localises to the cytoplasm. It catalyses the reaction 4-imidazolone-5-propanoate + H2O = N-formimidoyl-L-glutamate. The protein operates within amino-acid degradation; L-histidine degradation into L-glutamate; N-formimidoyl-L-glutamate from L-histidine: step 3/3. In terms of biological role, catalyzes the hydrolytic cleavage of the carbon-nitrogen bond in imidazolone-5-propanoate to yield N-formimidoyl-L-glutamate. It is the third step in the universal histidine degradation pathway. The chain is Imidazolonepropionase from Burkholderia multivorans (strain ATCC 17616 / 249).